The chain runs to 661 residues: UvrABC system protein B (661 aa).

Residues 26–181 (KGIQEGRKHQ…LLRKLVDIQY (156 aa)) form the Helicase ATP-binding domain. An ATP-binding site is contributed by 39 to 46 (GATGTGKT). Residues 92–115 (YYDYYQPEAYVPQTDTFIEKDASI) carry the Beta-hairpin motif. The Helicase C-terminal domain occupies 430–596 (QIDDLIGEIQ…TINKEIRDVI (167 aa)). The UVR domain maps to 625 to 660 (QKVVEQMEHEMKEAARALDFERAAELRDLLLELKAE).

This sequence belongs to the UvrB family. Forms a heterotetramer with UvrA during the search for lesions. Interacts with UvrC in an incision complex.

The protein resides in the cytoplasm. The UvrABC repair system catalyzes the recognition and processing of DNA lesions. A damage recognition complex composed of 2 UvrA and 2 UvrB subunits scans DNA for abnormalities. Upon binding of the UvrA(2)B(2) complex to a putative damaged site, the DNA wraps around one UvrB monomer. DNA wrap is dependent on ATP binding by UvrB and probably causes local melting of the DNA helix, facilitating insertion of UvrB beta-hairpin between the DNA strands. Then UvrB probes one DNA strand for the presence of a lesion. If a lesion is found the UvrA subunits dissociate and the UvrB-DNA preincision complex is formed. This complex is subsequently bound by UvrC and the second UvrB is released. If no lesion is found, the DNA wraps around the other UvrB subunit that will check the other stand for damage. This is UvrABC system protein B from Bacillus velezensis (strain DSM 23117 / BGSC 10A6 / LMG 26770 / FZB42) (Bacillus amyloliquefaciens subsp. plantarum).